We begin with the raw amino-acid sequence, 590 residues long: Polypeptide N-acetylgalactosaminyltransferase 8 (590 aa).

At 1–11 (MCLDIWRHKKK) the chain is on the cytoplasmic side. Residues 12–31 (VLPLLLLMAIGSIIYYLYTL) traverse the membrane as a helical; Signal-anchor for type II membrane protein segment. The Lumenal portion of the chain corresponds to 32–590 (KLEGERDESA…QHFWDNVKTQ (559 aa)). An N-linked (GlcNAc...) asparagine glycan is attached at asparagine 77. 5 disulfide bridges follow: cysteine 117–cysteine 345, cysteine 336–cysteine 419, cysteine 459–cysteine 475, cysteine 502–cysteine 517, and cysteine 546–cysteine 561. The tract at residues 127 to 236 (LPSVSVVITY…KGWLEPLIAP (110 aa)) is catalytic subdomain A. Aspartate 168 contributes to the substrate binding site. Aspartate 220 lines the Mn(2+) pocket. A substrate-binding site is contributed by serine 221. Histidine 222 serves as a coordination point for Mn(2+). Asparagine 241 is a glycosylation site (N-linked (GlcNAc...) asparagine). The tract at residues 291-353 (PHKNPIMNGG…PCSRVGHLFR (63 aa)) is catalytic subdomain B. Position 322 (tryptophan 322) interacts with substrate. Histidine 350 serves as a coordination point for Mn(2+). A substrate-binding site is contributed by arginine 353. The Ricin B-type lectin domain maps to 446–573 (ASGVLQSISS…KNHKQQWKFG (128 aa)).

The protein belongs to the glycosyltransferase 2 family. GalNAc-T subfamily. Mn(2+) serves as cofactor. As to expression, expressed in developing oocytes and egg chambers. During embryonic stages 9-11, expressed in the primordium of the foregut, midgut and hindgut. During embryonic stages 12-13, expressed in the posterior midgut and hindgut. During embryonic stages 14-15, expression continues in the hindgut. No expression detected during embryonic stages 16-17 or in third instar larvae imaginal disks.

It localises to the golgi apparatus membrane. It carries out the reaction L-seryl-[protein] + UDP-N-acetyl-alpha-D-galactosamine = a 3-O-[N-acetyl-alpha-D-galactosaminyl]-L-seryl-[protein] + UDP + H(+). The catalysed reaction is L-threonyl-[protein] + UDP-N-acetyl-alpha-D-galactosamine = a 3-O-[N-acetyl-alpha-D-galactosaminyl]-L-threonyl-[protein] + UDP + H(+). It participates in protein modification; protein glycosylation. Catalyzes the initial reaction in O-linked oligosaccharide biosynthesis, the transfer of an N-acetyl-D-galactosamine residue to a serine or threonine residue on the protein receptor. It can both act as a peptide transferase that transfers GalNAc onto unmodified peptide substrates, and as a glycopeptide transferase that requires the prior addition of a GalNAc on a peptide before adding additional GalNAc moieties. Prefers both EA2 and the diglycosylated Muc5AC-3/13 as substrates, albeit at very low levels fro Muc5AC-3/13. The protein is Polypeptide N-acetylgalactosaminyltransferase 8 of Drosophila melanogaster (Fruit fly).